Here is a 303-residue protein sequence, read N- to C-terminus: Epimerase family protein YfhF (303 aa).

It belongs to the NAD(P)-dependent epimerase/dehydratase family. SDR39U1 subfamily.

The polypeptide is Epimerase family protein YfhF (yfhF) (Bacillus subtilis (strain 168)).